The sequence spans 284 residues: Bifunctional protein FolD (284 aa).

Residues 165-167 (GRS), Ser190, and Val231 each bind NADP(+).

This sequence belongs to the tetrahydrofolate dehydrogenase/cyclohydrolase family. In terms of assembly, homodimer.

The catalysed reaction is (6R)-5,10-methylene-5,6,7,8-tetrahydrofolate + NADP(+) = (6R)-5,10-methenyltetrahydrofolate + NADPH. It carries out the reaction (6R)-5,10-methenyltetrahydrofolate + H2O = (6R)-10-formyltetrahydrofolate + H(+). The protein operates within one-carbon metabolism; tetrahydrofolate interconversion. In terms of biological role, catalyzes the oxidation of 5,10-methylenetetrahydrofolate to 5,10-methenyltetrahydrofolate and then the hydrolysis of 5,10-methenyltetrahydrofolate to 10-formyltetrahydrofolate. The sequence is that of Bifunctional protein FolD from Geobacillus thermodenitrificans (strain NG80-2).